A 431-amino-acid chain; its full sequence is Adenylosuccinate lyase (431 aa).

N(6)-(1,2-dicarboxyethyl)-AMP is bound by residues 4 to 5, 67 to 69, and 93 to 94; these read RY, NHD, and TS. Catalysis depends on His141, which acts as the Proton donor/acceptor. Position 212 (Gln212) interacts with N(6)-(1,2-dicarboxyethyl)-AMP. Ser262 serves as the catalytic Proton donor/acceptor. Residues Ser263, 268–270, and 307–311 contribute to the N(6)-(1,2-dicarboxyethyl)-AMP site; these read KKN and SVERY.

The protein belongs to the lyase 1 family. Adenylosuccinate lyase subfamily. As to quaternary structure, homotetramer. Residues from neighboring subunits contribute catalytic and substrate-binding residues to each active site.

It catalyses the reaction N(6)-(1,2-dicarboxyethyl)-AMP = fumarate + AMP. It carries out the reaction (2S)-2-[5-amino-1-(5-phospho-beta-D-ribosyl)imidazole-4-carboxamido]succinate = 5-amino-1-(5-phospho-beta-D-ribosyl)imidazole-4-carboxamide + fumarate. It participates in purine metabolism; AMP biosynthesis via de novo pathway; AMP from IMP: step 2/2. The protein operates within purine metabolism; IMP biosynthesis via de novo pathway; 5-amino-1-(5-phospho-D-ribosyl)imidazole-4-carboxamide from 5-amino-1-(5-phospho-D-ribosyl)imidazole-4-carboxylate: step 2/2. Functionally, catalyzes two reactions in de novo purine nucleotide biosynthesis. Catalyzes the breakdown of 5-aminoimidazole- (N-succinylocarboxamide) ribotide (SAICAR or 2-[5-amino-1-(5-phospho-beta-D-ribosyl)imidazole-4-carboxamido]succinate) to 5-aminoimidazole-4-carboxamide ribotide (AICAR or 5-amino-1-(5-phospho-beta-D-ribosyl)imidazole-4-carboxamide) and fumarate, and of adenylosuccinate (ADS or N(6)-(1,2-dicarboxyethyl)-AMP) to adenosine monophosphate (AMP) and fumarate. The sequence is that of Adenylosuccinate lyase (purB) from Thermotoga maritima (strain ATCC 43589 / DSM 3109 / JCM 10099 / NBRC 100826 / MSB8).